We begin with the raw amino-acid sequence, 237 residues long: UDP-2,3-diacylglucosamine hydrolase (237 aa).

Mn(2+)-binding residues include aspartate 9, histidine 11, aspartate 42, asparagine 80, and histidine 115. Residue 80–81 (NR) participates in substrate binding. Aspartate 123, serine 161, lysine 165, lysine 168, and histidine 196 together coordinate substrate. Residues histidine 196 and histidine 198 each coordinate Mn(2+).

It belongs to the LpxH family. Mn(2+) is required as a cofactor.

The protein resides in the cell inner membrane. The enzyme catalyses UDP-2-N,3-O-bis[(3R)-3-hydroxytetradecanoyl]-alpha-D-glucosamine + H2O = 2-N,3-O-bis[(3R)-3-hydroxytetradecanoyl]-alpha-D-glucosaminyl 1-phosphate + UMP + 2 H(+). The protein operates within glycolipid biosynthesis; lipid IV(A) biosynthesis; lipid IV(A) from (3R)-3-hydroxytetradecanoyl-[acyl-carrier-protein] and UDP-N-acetyl-alpha-D-glucosamine: step 4/6. In terms of biological role, hydrolyzes the pyrophosphate bond of UDP-2,3-diacylglucosamine to yield 2,3-diacylglucosamine 1-phosphate (lipid X) and UMP by catalyzing the attack of water at the alpha-P atom. Involved in the biosynthesis of lipid A, a phosphorylated glycolipid that anchors the lipopolysaccharide to the outer membrane of the cell. The polypeptide is UDP-2,3-diacylglucosamine hydrolase (Haemophilus influenzae (strain PittGG)).